Reading from the N-terminus, the 297-residue chain is Acetyl-coenzyme A carboxylase carboxyl transferase subunit beta (297 aa).

The 270-residue stretch at 27 to 296 folds into the CoA carboxyltransferase N-terminal domain; the sequence is LWHKCPSCEA…PEEAREAAAV (270 aa). The Zn(2+) site is built by Cys31, Cys34, Cys50, and Cys53. Residues 31 to 53 form a C4-type zinc finger; the sequence is CPSCEAVLYRPELEKTLDVCPKC.

This sequence belongs to the AccD/PCCB family. In terms of assembly, acetyl-CoA carboxylase is a heterohexamer composed of biotin carboxyl carrier protein (AccB), biotin carboxylase (AccC) and two subunits each of ACCase subunit alpha (AccA) and ACCase subunit beta (AccD). The cofactor is Zn(2+).

Its subcellular location is the cytoplasm. It catalyses the reaction N(6)-carboxybiotinyl-L-lysyl-[protein] + acetyl-CoA = N(6)-biotinyl-L-lysyl-[protein] + malonyl-CoA. The protein operates within lipid metabolism; malonyl-CoA biosynthesis; malonyl-CoA from acetyl-CoA: step 1/1. Component of the acetyl coenzyme A carboxylase (ACC) complex. Biotin carboxylase (BC) catalyzes the carboxylation of biotin on its carrier protein (BCCP) and then the CO(2) group is transferred by the transcarboxylase to acetyl-CoA to form malonyl-CoA. This is Acetyl-coenzyme A carboxylase carboxyl transferase subunit beta from Pseudomonas putida (strain ATCC 700007 / DSM 6899 / JCM 31910 / BCRC 17059 / LMG 24140 / F1).